A 207-amino-acid chain; its full sequence is Lipid A acyltransferase PagP (207 aa).

The first 24 residues, 1–24 (MKFDLTTAYTLSIPLLASSGTVLA), serve as a signal peptide directing secretion. Active-site residues include His79, Asp122, and Ser123.

This sequence belongs to the lipid A palmitoyltransferase family. Homodimer.

The protein resides in the cell outer membrane. It carries out the reaction a lipid A + a 1,2-diacyl-sn-glycero-3-phosphocholine = a hepta-acyl lipid A + a 2-acyl-sn-glycero-3-phosphocholine. The enzyme catalyses a lipid IVA + a 1,2-diacyl-sn-glycero-3-phosphocholine = a lipid IVB + a 2-acyl-sn-glycero-3-phosphocholine. It catalyses the reaction a lipid IIA + a 1,2-diacyl-sn-glycero-3-phosphocholine = a lipid IIB + a 2-acyl-sn-glycero-3-phosphocholine. In terms of biological role, transfers a fatty acid residue from the sn-1 position of a phospholipid to the N-linked hydroxyfatty acid chain on the proximal unit of lipid A or its precursors. The sequence is that of Lipid A acyltransferase PagP from Photorhabdus asymbiotica subsp. asymbiotica (strain ATCC 43949 / 3105-77) (Xenorhabdus luminescens (strain 2)).